A 125-amino-acid polypeptide reads, in one-letter code: Phosphoribosyl-AMP cyclohydrolase (125 aa).

Asp-74 lines the Mg(2+) pocket. Cys-75 lines the Zn(2+) pocket. Asp-76 and Asp-78 together coordinate Mg(2+). Residues Cys-92 and Cys-99 each coordinate Zn(2+).

This sequence belongs to the PRA-CH family. As to quaternary structure, homodimer. Mg(2+) is required as a cofactor. Zn(2+) serves as cofactor.

The protein resides in the cytoplasm. It carries out the reaction 1-(5-phospho-beta-D-ribosyl)-5'-AMP + H2O = 1-(5-phospho-beta-D-ribosyl)-5-[(5-phospho-beta-D-ribosylamino)methylideneamino]imidazole-4-carboxamide. Its pathway is amino-acid biosynthesis; L-histidine biosynthesis; L-histidine from 5-phospho-alpha-D-ribose 1-diphosphate: step 3/9. Catalyzes the hydrolysis of the adenine ring of phosphoribosyl-AMP. This chain is Phosphoribosyl-AMP cyclohydrolase, found in Geobacter sulfurreducens (strain ATCC 51573 / DSM 12127 / PCA).